We begin with the raw amino-acid sequence, 233 residues long: Purine nucleoside phosphorylase DeoD-type (233 aa).

A purine D-ribonucleoside is bound at residue His-4. Residues Gly-20, Arg-24, Arg-43, and 87–90 (RIGT) each bind phosphate. Residues 179-181 (EME) and 203-204 (SD) each bind a purine D-ribonucleoside. Asp-204 serves as the catalytic Proton donor.

It belongs to the PNP/UDP phosphorylase family. In terms of assembly, homohexamer; trimer of homodimers.

It catalyses the reaction a purine D-ribonucleoside + phosphate = a purine nucleobase + alpha-D-ribose 1-phosphate. It carries out the reaction a purine 2'-deoxy-D-ribonucleoside + phosphate = a purine nucleobase + 2-deoxy-alpha-D-ribose 1-phosphate. Catalyzes the reversible phosphorolytic breakdown of the N-glycosidic bond in the beta-(deoxy)ribonucleoside molecules, with the formation of the corresponding free purine bases and pentose-1-phosphate. The sequence is that of Purine nucleoside phosphorylase DeoD-type from Helicobacter pylori (strain HPAG1).